A 188-amino-acid polypeptide reads, in one-letter code: Protein salivary glands marred (188 aa).

The protein belongs to the TNFAIP8 family. Interacts with the Ste20-like MAP kinase msn.

It localises to the cytoplasm. The protein resides in the cytoskeleton. Important for modulating JNK signaling, cytoskeletal remodeling and autophagy in larval salivary glands. During salivary gland development, involved in the positive regulation of the JNK signaling pathway, acting downstream of the TNF ligand egr and upstream of bsk. This chain is Protein salivary glands marred, found in Drosophila melanogaster (Fruit fly).